Reading from the N-terminus, the 690-residue chain is Glycine--tRNA ligase beta subunit (690 aa).

The protein belongs to the class-II aminoacyl-tRNA synthetase family. In terms of assembly, tetramer of two alpha and two beta subunits.

It is found in the cytoplasm. The catalysed reaction is tRNA(Gly) + glycine + ATP = glycyl-tRNA(Gly) + AMP + diphosphate. This is Glycine--tRNA ligase beta subunit from Buchnera aphidicola subsp. Acyrthosiphon pisum (strain 5A).